Consider the following 271-residue polypeptide: Small ribosomal subunit protein uS2 (271 aa).

Over residues 229 to 242 (KERKGKDAEEELKK) the composition is skewed to basic and acidic residues. Residues 229 to 271 (KERKGKDAEEELKKAAAPKAAPAAEAAPAAEAPAAPVVEAAAE) form a disordered region. Residues 243–271 (AAAPKAAPAAEAAPAAEAPAAPVVEAAAE) show a composition bias toward low complexity.

It belongs to the universal ribosomal protein uS2 family.

The chain is Small ribosomal subunit protein uS2 from Nitratidesulfovibrio vulgaris (strain DSM 19637 / Miyazaki F) (Desulfovibrio vulgaris).